The sequence spans 1179 residues: DNA-directed RNA polymerase subunit beta (1179 aa).

The span at 1153–1162 shows a compositional bias: acidic residues; the sequence is MREMEDEDEG. Residues 1153 to 1179 are disordered; sequence MREMEDEDEGNGEKLNLVLEGGSLNEE.

It belongs to the RNA polymerase beta chain family. In terms of assembly, the RNAP catalytic core consists of 2 alpha, 1 beta, 1 beta' and 1 omega subunit. When a sigma factor is associated with the core the holoenzyme is formed, which can initiate transcription.

The catalysed reaction is RNA(n) + a ribonucleoside 5'-triphosphate = RNA(n+1) + diphosphate. In terms of biological role, DNA-dependent RNA polymerase catalyzes the transcription of DNA into RNA using the four ribonucleoside triphosphates as substrates. The chain is DNA-directed RNA polymerase subunit beta from Brevibacillus brevis (strain 47 / JCM 6285 / NBRC 100599).